The following is a 427-amino-acid chain: O-methyltransferase PaMT (427 aa).

S-adenosyl-L-methionine-binding residues include Trp-230 and Asp-281. His-326 serves as the catalytic Proton acceptor.

The protein belongs to the class I-like SAM-binding methyltransferase superfamily. Cation-independent O-methyltransferase family. COMT subfamily. The cofactor is S-adenosyl-L-methionine.

It participates in mycotoxin biosynthesis. Functionally, O-methyltransferase; part of the 2 gene clusters that mediate the biosynthesis of fusicoccins, diterpene glucosides that display phytohormone-like activity and function as potent activators of plasma membrane H(+)-ATPases in plants by modifying 14-3-3 proteins and cause the plant disease constriction canker. The first step in the pathway is performed by the fusicoccadiene synthase PaFS that possesses both prenyl transferase and terpene cyclase activity, converting isopentenyl diphosphate and dimethylallyl diphosphate into geranylgeranyl diphosphate (GGDP) and successively converting GGDP into fusicocca-2,10(14)-diene, a precursor for fusicoccin H. The second step is the oxidation at the C-8 position by the cytochrome P450 monooxygenase PaP450-2 to yield fusicocca-2,10(14)-diene-8-beta-ol. The cytochrome P450 monooxygenase PaP450-1 then catalyzes the hydroxylation at the C-16 position to produce fusicocca-2,10(14)-diene-8-beta,16-diol. The dioxygenase fc-dox then catalyzes the 16-oxydation of fusicocca-2,10(14)-diene-8-beta,16-diol to yield an aldehyde (8-beta-hydroxyfusicocca-1,10(14)-dien-16-al). The short-chain dehydrogenase/reductase fc-sdr catalyzes the reduction of the aldehyde to yield fusicocca-1,10(14)-diene-8-beta,16-diol. The next step is the hydroxylation at C-9 performed by the cytochrome P450 monooxygenase PaP450-3 that leads to fusicoccin H aglycon which is glycosylated to fusicoccin H by the O-glycosyltransferase PaGT. Hydroxylation at C-12 by the cytochrome P450 monooxygenase PaP450-4 leads then to the production of fusicoccin Q and is followed by methylation by the O-methyltransferase PaMT to yield fusicoccin P. Fusicoccin P is further converted to fusicoccin J via prenylation by the O-glucose prenyltransferase PaPT. Cytochrome P450 monooxygenase PaP450-5 then performs hydroxylation at C-19 to yield dideacetyl-fusicoccin A which is acetylated to 3'-O-deacetyl-fusicoccin A by the O-acetyltransferase PaAT-2. Finally, a another acetylation by the O-acetyltransferase PaAT-1 yields fusicoccin A. This Phomopsis amygdali (Fusicoccum amygdali) protein is O-methyltransferase PaMT.